Here is a 485-residue protein sequence, read N- to C-terminus: NADH-quinone oxidoreductase subunit N (485 aa).

The next 14 membrane-spanning stretches (helical) occupy residues 8–28 (LIAL…MLSI), 35–55 (FLNA…LWFV), 71–91 (GFAM…CTFA), 105–125 (FYLL…ANHL), 127–147 (ALFL…GYAF), 159–179 (YTIL…LVYA), 203–223 (LLAG…LVPF), 235–255 (PAPV…GVVM), 271–291 (IVLG…ALSQ), 297–317 (LLGY…IALQ), 326–346 (VGVY…VVSL), 373–393 (AAVM…LGFI), 408–430 (WWLV…RVAV), and 455–475 (IVVL…QPLI).

It belongs to the complex I subunit 2 family. NDH-1 is composed of 13 different subunits. Subunits NuoA, H, J, K, L, M, N constitute the membrane sector of the complex.

It is found in the cell inner membrane. The catalysed reaction is a quinone + NADH + 5 H(+)(in) = a quinol + NAD(+) + 4 H(+)(out). NDH-1 shuttles electrons from NADH, via FMN and iron-sulfur (Fe-S) centers, to quinones in the respiratory chain. The immediate electron acceptor for the enzyme in this species is believed to be ubiquinone. Couples the redox reaction to proton translocation (for every two electrons transferred, four hydrogen ions are translocated across the cytoplasmic membrane), and thus conserves the redox energy in a proton gradient. The polypeptide is NADH-quinone oxidoreductase subunit N (Citrobacter koseri (strain ATCC BAA-895 / CDC 4225-83 / SGSC4696)).